A 447-amino-acid polypeptide reads, in one-letter code: Teichoic acids export ATP-binding protein TagH (447 aa).

The region spanning 24 to 246 (DKLKTLFSVF…YRAFLHRYNH (223 aa)) is the ABC transporter domain. 60 to 67 (GLNGSGKS) is an ATP binding site. A unknown region spans residues 247–447 (FTEPQKESYQ…QVLKLKEVTE (201 aa)). The tract at residues 359–393 (NAVKTTKTKPASTKESRQQEEVQPSPTNVPENNNS) is disordered. Composition is skewed to polar residues over residues 360–369 (AVKTTKTKPA) and 379–393 (EVQPSPTNVPENNNS). The region spanning 398–442 (STYTVEVGDSVSLIAENHGLTIEQLQTLNPEIIEVPIYPGQVLKL) is the LysM domain.

This sequence belongs to the ABC transporter superfamily. Teichoic acids exporter (TC 3.A.1.104.1) family. In terms of assembly, the complex is composed of two ATP-binding proteins (TagH) and two transmembrane proteins (TagG).

It localises to the cell membrane. The enzyme catalyses ATP + H2O + teichoic acidSide 1 = ADP + phosphate + teichoic acidSide 2.. Functionally, part of the ABC transporter complex TagGH involved in teichoic acids export. Responsible for energy coupling to the transport system. The chain is Teichoic acids export ATP-binding protein TagH from Enterococcus faecalis (strain ATCC 700802 / V583).